Here is a 207-residue protein sequence, read N- to C-terminus: Calcipressin-like protein (207 aa).

Residues 176–181 (PAIIVH) form a required for tax-6 interaction region.

It belongs to the RCAN family. As to quaternary structure, interacts with tax-6 (via catalytic domain); the interaction is calcium-dependent. As to expression, expressed in lateral hypodermal cells, marginal cells of the pharynx, vulva epithelial cells, ventral and dorsal nerve cords and commissures and various neurons in the anterior and posterior regions. Expressed in male tail structures including the diagonal muscles, sensory rays and spicules. Expressed in PHC neurons and most tail neurons and support cells of the phasmid neurons. Also expressed in pharyngeal muscle, head neurons, excretory canal cells and hypodermal seam cells.

Inhibits tax-6/calcineurin A phosphatase activity and thereby negatively regulates calcineurin-mediated functions. Plays a role in modulating temperature-dependent calcium responses in AFD neurons and in addition, also negatively regulates thermotaxis in a tax-6-dependent manner in AFD neurons. In response to changes in intracellular calcium levels may also regulate nuclear translocation of transcriptional regulators such as crtc-1. May play a role in regulating body size. Plays a role in male tail tip morphogenesis. The protein is Calcipressin-like protein of Caenorhabditis elegans.